The chain runs to 207 residues: Protein DMP1 (207 aa).

Residues 1–20 are disordered; that stretch reads MSETSLLIPKTNSPASSENM. Helical transmembrane passes span 33 to 53, 64 to 84, 121 to 141, and 159 to 179; these read LIKL…PVLT, VMSS…CFTD, IADF…VLLD, and LVMA…ALFP.

Belongs to the plant DMP1 protein family. In terms of tissue distribution, expressed in leaves, siliques and roots.

The protein resides in the endoplasmic reticulum membrane. The protein localises to the vacuole membrane. Its function is as follows. Involved in membrane remodeling including fission during breakdown of the endoplasmic reticulum (ER) and the tonoplast during leaf senescence and in membrane fusion during vacuole biogenesis in roots. The protein is Protein DMP1 of Arabidopsis thaliana (Mouse-ear cress).